The following is a 125-amino-acid chain: Cyclic diguanosine monophosphate-binding protein PA4608 (125 aa).

Position 6–13 (6–13 (DERRRFHR)) interacts with 3',3'-c-di-GMP. Positions 7 to 103 (ERRRFHRIAF…SISHLRRLVE (97 aa)) constitute a PilZ domain. The short motif at 9–13 (RRFHR) is the RXXXR motif; surrounds the surface of the c-di-GMP binding site element. Positions 35–40 (DVSLHG) match the DXSXXG motif; surrounds the surface of the c-di-GMP binding site motif. Trp-77 contacts 3',3'-c-di-GMP.

Monomer in both c-di-GMP-bound and free forms.

In terms of biological role, binds the second messenger bis-(3'-5') cyclic dimeric guanosine monophosphate (c-di-GMP). Can bind two c-di-GMP molecules per monomer. May play a role in bacterial second-messenger regulated processes. Binding to c-di-GMP induces a conformational change of the C- and N-termini resulting in the exposure of a highly negative surface on one side of the protein to a possible effector protein. This is Cyclic diguanosine monophosphate-binding protein PA4608 from Pseudomonas aeruginosa (strain ATCC 15692 / DSM 22644 / CIP 104116 / JCM 14847 / LMG 12228 / 1C / PRS 101 / PAO1).